Consider the following 319-residue polypeptide: MTEFLTAAFYKFVELPDFAQLKAPLLTCCEANDVKGTILLATEGINSTIAGPAVGVHAVLAYLRRDPRLADLQHKEAWSAKAPFYRMKVRLKREIVTMGVPGIDPNLVVGTYVKPQDWNALIGDPDVVVIDTRNDYEVGIGTFAGAVNPDIQSFAMLPQWLAQAPALHPATGKKPKVAMFCTGGIRCEKSTALLRAQGFDEVFHLEGGILKYLETIPPEQSLWQGQCFVFDERVSVGHGLIPGQHDLCRACRQPLDDADLASPLFEAGVSCPKCHAITRDIQKDGARERQRQWELAKARQQVHIGASPEPKAMPATAGR.

A Rhodanese domain is found at 123–221 (GDPDVVVIDT…YLETIPPEQS (99 aa)). The active-site Cysteine persulfide intermediate is the Cys-181. Residues 298–319 (ARQQVHIGASPEPKAMPATAGR) are disordered.

It belongs to the TrhO family.

It carries out the reaction uridine(34) in tRNA + AH2 + O2 = 5-hydroxyuridine(34) in tRNA + A + H2O. Its function is as follows. Catalyzes oxygen-dependent 5-hydroxyuridine (ho5U) modification at position 34 in tRNAs. This chain is tRNA uridine(34) hydroxylase, found in Albidiferax ferrireducens (strain ATCC BAA-621 / DSM 15236 / T118) (Rhodoferax ferrireducens).